The primary structure comprises 536 residues: Chaperonin GroEL (536 aa).

ATP is bound by residues 29 to 32 (TLGP), 86 to 90 (DGTTT), glycine 412, and aspartate 493.

It belongs to the chaperonin (HSP60) family. In terms of assembly, forms a cylinder of 14 subunits composed of two heptameric rings stacked back-to-back. Interacts with the co-chaperonin GroES.

Its subcellular location is the cytoplasm. The catalysed reaction is ATP + H2O + a folded polypeptide = ADP + phosphate + an unfolded polypeptide.. In terms of biological role, together with its co-chaperonin GroES, plays an essential role in assisting protein folding. The GroEL-GroES system forms a nano-cage that allows encapsulation of the non-native substrate proteins and provides a physical environment optimized to promote and accelerate protein folding. In Aster yellows witches'-broom phytoplasma (strain AYWB), this protein is Chaperonin GroEL.